The primary structure comprises 277 residues: MGIIKYKPTTNGRRNMTSSDFAEITKTTPEKTLLESQSHTAGRNAHGHITVRHRGGGHKQYYRVIDFKRIKDDIKATVKSIEYDPNRTSNIALIQYPDGIKAYIIAPKGLEVGMIVESGVNADIKVGNALPLANIPDGTLIHNIELKPGKGGQLVRSAGTSAQLLGKEGKYAIVRLTSGETRMILLTCRATVGTVGNGQHELIKIGKAGRKRWMGIRPTVRGSVMNPNDHPHGGGEGKAPIGRPSPMSPWGKKTLGKKTRSSKARSEKLIIRHRKSR.

A disordered region spans residues 220-277; it reads VRGSVMNPNDHPHGGGEGKAPIGRPSPMSPWGKKTLGKKTRSSKARSEKLIIRHRKSR. Residues 254-263 are compositionally biased toward basic residues; it reads TLGKKTRSSK.

Belongs to the universal ribosomal protein uL2 family. Part of the 50S ribosomal subunit. Forms a bridge to the 30S subunit in the 70S ribosome.

In terms of biological role, one of the primary rRNA binding proteins. Required for association of the 30S and 50S subunits to form the 70S ribosome, for tRNA binding and peptide bond formation. It has been suggested to have peptidyltransferase activity; this is somewhat controversial. Makes several contacts with the 16S rRNA in the 70S ribosome. In Latilactobacillus sakei subsp. sakei (strain 23K) (Lactobacillus sakei subsp. sakei), this protein is Large ribosomal subunit protein uL2.